We begin with the raw amino-acid sequence, 151 residues long: Deoxyuridine 5'-triphosphate nucleotidohydrolase (151 aa).

Substrate contacts are provided by residues 70-72 (RSG), Asn-83, and 87-89 (LID).

It belongs to the dUTPase family. It depends on Mg(2+) as a cofactor.

The enzyme catalyses dUTP + H2O = dUMP + diphosphate + H(+). The protein operates within pyrimidine metabolism; dUMP biosynthesis; dUMP from dCTP (dUTP route): step 2/2. Its function is as follows. This enzyme is involved in nucleotide metabolism: it produces dUMP, the immediate precursor of thymidine nucleotides and it decreases the intracellular concentration of dUTP so that uracil cannot be incorporated into DNA. The chain is Deoxyuridine 5'-triphosphate nucleotidohydrolase from Methylococcus capsulatus (strain ATCC 33009 / NCIMB 11132 / Bath).